A 249-amino-acid chain; its full sequence is uncharacterized protein (249 aa).

Composition is skewed to polar residues over residues 66 to 79 (NASL…TISP) and 92 to 119 (ASGS…SSSE). Residues 66-142 (NASLESGQSS…GPTSPRVTPG (77 aa)) form a disordered region.

It localises to the plastid. It is found in the chloroplast. This is an uncharacterized protein from Chlorella vulgaris (Green alga).